Here is a 232-residue protein sequence, read N- to C-terminus: Imidazoleglycerol-phosphate dehydratase (232 aa).

It belongs to the imidazoleglycerol-phosphate dehydratase family.

The enzyme catalyses D-erythro-1-(imidazol-4-yl)glycerol 3-phosphate = 3-(imidazol-4-yl)-2-oxopropyl phosphate + H2O. It participates in amino-acid biosynthesis; L-histidine biosynthesis; L-histidine from 5-phospho-alpha-D-ribose 1-diphosphate: step 6/9. The polypeptide is Imidazoleglycerol-phosphate dehydratase (HIS3) (Lachancea kluyveri (strain ATCC 58438 / CBS 3082 / BCRC 21498 / NBRC 1685 / JCM 7257 / NCYC 543 / NRRL Y-12651) (Yeast)).